The following is a 317-amino-acid chain: GTP cyclohydrolase MptA (317 aa).

This sequence belongs to the GTP cyclohydrolase IV family. As to quaternary structure, homodimer. It depends on Fe(2+) as a cofactor.

It carries out the reaction GTP + H2O = 7,8-dihydroneopterin 2',3'-cyclic phosphate + formate + diphosphate + H(+). It participates in cofactor biosynthesis; 5,6,7,8-tetrahydromethanopterin biosynthesis. Converts GTP to 7,8-dihydro-D-neopterin 2',3'-cyclic phosphate, the first intermediate in the biosynthesis of coenzyme methanopterin. This Methanococcoides burtonii (strain DSM 6242 / NBRC 107633 / OCM 468 / ACE-M) protein is GTP cyclohydrolase MptA.